The chain runs to 905 residues: Core protein VP3 (905 aa).

It belongs to the orbivirus VP3 family.

It localises to the virion. The VP3 protein is one of the five proteins (with VP1, VP4, VP6 and VP7) which form the inner capsid of the virus. This chain is Core protein VP3 (Segment-3), found in African horse sickness virus 6 (AHSV-6).